Here is a 543-residue protein sequence, read N- to C-terminus: Ipecac alkaloid beta-glucosidase 3 (543 aa).

A beta-D-glucoside contacts are provided by residues Gln-36, His-140, 185 to 186 (NE), Tyr-350, Glu-422, Trp-471, and Phe-487. The active-site Proton donor is Glu-186. Glu-422 (nucleophile) is an active-site residue.

It belongs to the glycosyl hydrolase 1 family.

The protein resides in the cytoplasm. It is found in the cytosol. The enzyme catalyses deacetylipecoside + H2O = deacetylipecoside aglycone + D-glucose. The catalysed reaction is deacetylisoipecoside + H2O = deacetylisoipecoside aglycone + D-glucose. It participates in alkaloid biosynthesis. Its function is as follows. Beta-glucosidase catalyzing deglucosylation on N-deacetylisoipecoside and N-deacetylipecoside. The protein is Ipecac alkaloid beta-glucosidase 3 of Carapichea ipecacuanha (Ipecac).